Consider the following 309-residue polypeptide: Transaldolase (309 aa).

Catalysis depends on Lys-125, which acts as the Schiff-base intermediate with substrate.

The protein belongs to the transaldolase family. Type 1 subfamily. Homodimer.

The protein resides in the cytoplasm. It catalyses the reaction D-sedoheptulose 7-phosphate + D-glyceraldehyde 3-phosphate = D-erythrose 4-phosphate + beta-D-fructose 6-phosphate. It functions in the pathway carbohydrate degradation; pentose phosphate pathway; D-glyceraldehyde 3-phosphate and beta-D-fructose 6-phosphate from D-ribose 5-phosphate and D-xylulose 5-phosphate (non-oxidative stage): step 2/3. Its function is as follows. Transaldolase is important for the balance of metabolites in the pentose-phosphate pathway. This Pseudomonas syringae pv. tomato (strain ATCC BAA-871 / DC3000) protein is Transaldolase.